The sequence spans 178 residues: N-alpha-acetyltransferase 20 (178 aa).

The N-acetyltransferase domain occupies 2–157 (TTLRAFTCDD…DAYDMRKALS (156 aa)). The tract at residues 159-178 (DTEKKSIVPLPHPVRPEDIE) is disordered.

Belongs to the acetyltransferase family. ARD1 subfamily. In terms of assembly, component of the N-terminal acetyltransferase B (NatB) complex which is composed of naa20 and naa25.

It localises to the cytoplasm. The protein resides in the nucleus. The catalysed reaction is N-terminal L-methionyl-L-asparaginyl-[protein] + acetyl-CoA = N-terminal N(alpha)-acetyl-L-methionyl-L-asparaginyl-[protein] + CoA + H(+). It carries out the reaction N-terminal L-methionyl-L-glutaminyl-[protein] + acetyl-CoA = N-terminal N(alpha)-acetyl-L-methionyl-L-glutaminyl-[protein] + CoA + H(+). It catalyses the reaction N-terminal L-methionyl-L-aspartyl-[protein] + acetyl-CoA = N-terminal N(alpha)-acetyl-L-methionyl-L-aspartyl-[protein] + CoA + H(+). The enzyme catalyses N-terminal L-methionyl-L-glutamyl-[protein] + acetyl-CoA = N-terminal N(alpha)-acetyl-L-methionyl-L-glutamyl-[protein] + CoA + H(+). Catalytic subunit of the NatB complex which catalyzes acetylation of the N-terminal methionine residues of peptides beginning with Met-Asp, Met-Glu, Met-Asn and Met-Gln. Proteins with cell cycle functions are overrepresented in the pool of NatB substrates. Required for maintaining the structure and function of actomyosin fibers and for proper cellular migration. The sequence is that of N-alpha-acetyltransferase 20 (naa20) from Xenopus laevis (African clawed frog).